Here is a 163-residue protein sequence, read N- to C-terminus: Putative 4-hydroxy-4-methyl-2-oxoglutarate aldolase (163 aa).

Residues 76-79 and arginine 98 contribute to the substrate site; that span reads GDML. Aspartate 99 contributes to the a divalent metal cation binding site.

The protein belongs to the class II aldolase/RraA-like family. Homotrimer. A divalent metal cation is required as a cofactor.

It catalyses the reaction 4-hydroxy-4-methyl-2-oxoglutarate = 2 pyruvate. The catalysed reaction is oxaloacetate + H(+) = pyruvate + CO2. Catalyzes the aldol cleavage of 4-hydroxy-4-methyl-2-oxoglutarate (HMG) into 2 molecules of pyruvate. Also contains a secondary oxaloacetate (OAA) decarboxylase activity due to the common pyruvate enolate transition state formed following C-C bond cleavage in the retro-aldol and decarboxylation reactions. The chain is Putative 4-hydroxy-4-methyl-2-oxoglutarate aldolase from Pseudomonas entomophila (strain L48).